The sequence spans 350 residues: Zona pellucida-binding protein 1 (350 aa).

An N-terminal signal peptide occupies residues 1–44 (MEALAPGRAPRGRRRAGASGSVLSPLSLAAVLLCALLRAPPAVG). N-linked (GlcNAc...) asparagine glycans are attached at residues asparagine 113, asparagine 186, and asparagine 339.

It belongs to the zona pellucida-binding protein Sp38 family. N-glycosylated. As to expression, expressed in testis (at protein level). Expressed in male germ cells.

The protein localises to the cytoplasmic vesicle. Its subcellular location is the secretory vesicle. The protein resides in the acrosome. It is found in the acrosome membrane. It localises to the secreted. Functionally, plays a role in acrosome compaction and sperm morphogenesis. Is implicated in sperm-oocyte interaction during fertilization. The sequence is that of Zona pellucida-binding protein 1 (Zpbp) from Mus musculus (Mouse).